A 231-amino-acid chain; its full sequence is ABC transporter ATP-binding protein YtrE (231 aa).

Positions 4 to 231 constitute an ABC transporter domain; that stretch reads VQHIDHSFTI…VLKGGITVEV (228 aa). Position 42 to 49 (42 to 49) interacts with ATP; sequence GRSGSGKS.

This sequence belongs to the ABC transporter superfamily. As to quaternary structure, the complex is composed of 2 ATP-binding proteins (YtrB and YtrE), 2 transmembrane proteins (YtrC and YtrD) and a solute-binding protein (YtrF).

It is found in the cell membrane. Functionally, part of the ABC transporter complex YtrBCDEF that plays a role in acetoin utilization during stationary phase and sporulation. In Bacillus subtilis (strain 168), this protein is ABC transporter ATP-binding protein YtrE (ytrE).